A 363-amino-acid chain; its full sequence is DNA replication and repair protein RecF (363 aa).

ATP is bound at residue 30–37 (GINGSGKS).

Belongs to the RecF family.

It localises to the cytoplasm. The RecF protein is involved in DNA metabolism; it is required for DNA replication and normal SOS inducibility. RecF binds preferentially to single-stranded, linear DNA. It also seems to bind ATP. This Pseudoalteromonas atlantica (strain T6c / ATCC BAA-1087) protein is DNA replication and repair protein RecF.